We begin with the raw amino-acid sequence, 530 residues long: S-adenosylhomocysteine hydrolase-like protein 1 (530 aa).

An N-acetylmethionine modification is found at Met-1. An N-acetylserine modification is found at Ser-2. Ser-2 is modified (phosphoserine). Lys-40 is subject to N6-acetyllysine. The interval 53–103 (KFPTKTGRRSLSRSISQSSTDSYSSAASYTDSSDDEVSPREKQQTNSKGSS) is disordered. The segment covering 64 to 83 (SRSISQSSTDSYSSAASYTD) has biased composition (low complexity). Residues 65–92 (RSISQSSTDSYSSAASYTDSSDDEVSPR) are PEST. Ser-68, Ser-71, Ser-74, Ser-77, and Ser-84 each carry phosphoserine. The interval 138–201 (QGEKPLAGAK…EAGVAVFAWK (64 aa)) is interaction with BCL2L10. Thr-155, Asp-229, Glu-254, Lys-284, and Asp-288 together coordinate substrate. The tract at residues 281–448 (SVTKQKFDNL…EGRLLNLSCS (168 aa)) is NAD binding. NAD(+) is bound by residues 318 to 322 (GYGEV), Glu-341, and Asn-376. Position 391 is a phosphoserine (Ser-391). 397–399 (MGH) lines the NAD(+) pocket. Positions 520-530 (NGPFKPNYYRY) are PDZ-binding.

Belongs to the adenosylhomocysteinase family. As to quaternary structure, forms multimers. Forms heteromultimers with AHCYL2 (via the C-terminal region). Interacts (when phosphorylated) with ITPR1 (when not phosphorylated); the interaction suppresses inositol 1,4,5-trisphosphate binding to ITPR1. Interacts with BCL2L10; this strengthens the interaction of AHCYL1 with ITPR1. Interacts with CFTR and SLC26A6; the interactions take place once AHCYL1 is released from ITPR1 and increase CFTR and SLC26A6 activities. Interacts with RRM1; in a phosphorylation- and (dATP)-dependent manner. Interacts (via PEST domain when phosphorylated) with SLC4A4 isoform 1 but not isoform 2; the interaction increases SLC4A4 isoform 1 activity. Interacts (when phosphorylated) with SLC9A3; the interaction is required for SLC9A3 apical location and activity. Interacts (when phosphorylated) with FIP1L1; the interaction is direct and associates AHCYL1 with the CPSF complex and RNA. Interacts with PAPOLA. Interacts with ZCCHC4. Interacts with AHCY. Requires NAD(+) as cofactor. In terms of processing, phosphorylated at Ser/Thr residues between Ser-68 and Thr-72 in the PEST region: required for interaction with dATP-bound RRM1 and ITPR1. Phosphorylation at Ser-68 by PRKD1 and CAMK4 is required for further phosphorylations by CSNK1A1. Phosphorylation is induced by oxidative stress. Probably phosphorylated by CAMK2A; phosphorylation at Ser-68 may be required for interaction with SLC9A3. Dephosphorylated in response to apoptotic stress conditions which causes translocation of both AHCYL1 and BCL2L10 from mitochondria-associated endoplasmic reticulum membranes and promotes apoptosis. Expressed in dendritic cells.

The protein resides in the endoplasmic reticulum. The protein localises to the cytoplasm. Its subcellular location is the cytosol. It localises to the apical cell membrane. It is found in the microsome. Multifaceted cellular regulator which coordinates several essential cellular functions including regulation of epithelial HCO3(-) and fluid secretion, mRNA processing and DNA replication. Regulates ITPR1 sensitivity to inositol 1,4,5-trisphosphate, competing for the common binding site and acting as endogenous 'pseudoligand' whose inhibitory activity can be modulated by its phosphorylation status. Promotes the formation of contact points between the endoplasmic reticulum (ER) and mitochondria, facilitating transfer of Ca(2+) from the ER to mitochondria. Under normal cellular conditions, functions cooperatively with BCL2L10 to limit ITPR1-mediated Ca(2+) release but, under apoptotic stress conditions, dephosphorylated which promotes dissociation of both AHCYL1 and BCL2L10 from mitochondria-associated endoplasmic reticulum membranes, inhibits BCL2L10 interaction with ITPR1 and leads to increased Ca(2+) transfer to mitochondria which promotes apoptosis. In the pancreatic and salivary ducts, at resting state, attenuates inositol 1,4,5-trisphosphate-induced calcium release by interacting with ITPR1. When extracellular stimuli induce ITPR1 phosphorylation or inositol 1,4,5-trisphosphate production, dissociates from ITPR1 to interact with CFTR and SLC26A6, mediating their synergistic activation by calcium and cAMP that stimulates the epithelial secretion of electrolytes and fluid. Also activates basolateral SLC4A4 isoform 1 to coordinate fluid and HCO3(-) secretion. Inhibits the effect of STK39 on SLC4A4 and CFTR by recruiting PP1 phosphatase which activates SLC4A4, SLC26A6 and CFTR through dephosphorylation. Mediates the induction of SLC9A3 surface expression produced by Angiotensin-2. Depending on the cell type, activates SLC9A3 in response to calcium or reverses SLC9A3R2-dependent calcium inhibition. May modulate the polyadenylation state of specific mRNAs, both by controlling the subcellular location of FIP1L1 and by inhibiting PAPOLA activity, in response to a stimulus that alters its phosphorylation state. Acts as a (dATP)-dependent inhibitor of ribonucleotide reductase large subunit RRM1, controlling the endogenous dNTP pool and ensuring normal cell cycle progression. In vitro does not exhibit any S-adenosyl-L-homocysteine hydrolase activity. The chain is S-adenosylhomocysteine hydrolase-like protein 1 from Homo sapiens (Human).